A 242-amino-acid polypeptide reads, in one-letter code: Large ribosomal subunit protein uL3 (242 aa).

Positions 131–165 (GRATHGNSVSHRTHGSTGQRQDPGKVFKGKKMAGH) are disordered. Residues 135 to 150 (HGNSVSHRTHGSTGQR) are compositionally biased toward polar residues. N5-methylglutamine is present on Q151.

It belongs to the universal ribosomal protein uL3 family. As to quaternary structure, part of the 50S ribosomal subunit. Forms a cluster with proteins L14 and L19. Post-translationally, methylated by PrmB.

Functionally, one of the primary rRNA binding proteins, it binds directly near the 3'-end of the 23S rRNA, where it nucleates assembly of the 50S subunit. The protein is Large ribosomal subunit protein uL3 of Chelativorans sp. (strain BNC1).